We begin with the raw amino-acid sequence, 537 residues long: Chaperonin GroEL 3 (537 aa).

ATP is bound by residues 30–33 (TLGP), 87–91 (DGTTT), Gly-414, 480–482 (DAL), and Asp-496.

This sequence belongs to the chaperonin (HSP60) family. Forms a cylinder of 14 subunits composed of two heptameric rings stacked back-to-back. Interacts with the co-chaperonin GroES.

The protein resides in the cytoplasm. It carries out the reaction ATP + H2O + a folded polypeptide = ADP + phosphate + an unfolded polypeptide.. Together with its co-chaperonin GroES, plays an essential role in assisting protein folding. The GroEL-GroES system forms a nano-cage that allows encapsulation of the non-native substrate proteins and provides a physical environment optimized to promote and accelerate protein folding. The chain is Chaperonin GroEL 3 from Acaryochloris marina (strain MBIC 11017).